Here is a 238-residue protein sequence, read N- to C-terminus: Large ribosomal subunit protein uL2 (238 aa).

Residues 198-238 (HPHGGGLHQSVSRPSTVSRNAPPGRKVGHIASRRTGRRGGA) are disordered. Residues 206 to 216 (QSVSRPSTVSR) are compositionally biased toward polar residues. Residues 223 to 238 (KVGHIASRRTGRRGGA) are compositionally biased toward basic residues.

The protein belongs to the universal ribosomal protein uL2 family. In terms of assembly, part of the 50S ribosomal subunit. Forms a bridge to the 30S subunit in the 70S ribosome.

In terms of biological role, one of the primary rRNA binding proteins. Required for association of the 30S and 50S subunits to form the 70S ribosome, for tRNA binding and peptide bond formation. It has been suggested to have peptidyltransferase activity; this is somewhat controversial. Makes several contacts with the 16S rRNA in the 70S ribosome. The chain is Large ribosomal subunit protein uL2 from Sulfolobus acidocaldarius (strain ATCC 33909 / DSM 639 / JCM 8929 / NBRC 15157 / NCIMB 11770).